The following is a 342-amino-acid chain: L-threonine 3-dehydrogenase (342 aa).

Zn(2+) is bound at residue cysteine 39. Active-site charge relay system residues include threonine 41 and histidine 44. Zn(2+) is bound by residues histidine 64, glutamate 65, cysteine 94, cysteine 97, cysteine 100, and cysteine 108. NAD(+)-binding positions include isoleucine 176, aspartate 196, arginine 201, 263-265 (LGI), and 287-288 (IY).

It belongs to the zinc-containing alcohol dehydrogenase family. Homotetramer. Zn(2+) is required as a cofactor.

Its subcellular location is the cytoplasm. The catalysed reaction is L-threonine + NAD(+) = (2S)-2-amino-3-oxobutanoate + NADH + H(+). Its pathway is amino-acid degradation; L-threonine degradation via oxydo-reductase pathway; glycine from L-threonine: step 1/2. Its function is as follows. Catalyzes the NAD(+)-dependent oxidation of L-threonine to 2-amino-3-ketobutyrate. The protein is L-threonine 3-dehydrogenase of Protochlamydia amoebophila (strain UWE25).